Here is a 278-residue protein sequence, read N- to C-terminus: Fasciclin-like arabinogalactan protein 5 (278 aa).

The signal sequence occupies residues Met1–Ala24. One can recognise an FAS1 domain in the interval Asn25–Ile169. Asn26, Asn74, Asn126, and Asn159 each carry an N-linked (GlcNAc...) asparagine glycan. Positions Val199–Ser257 are disordered. Residues Ala224–Ala239 show a composition bias toward low complexity. The segment covering Asp240–Lys251 has biased composition (basic and acidic residues). Ser255 carries GPI-anchor amidated serine lipidation. A propeptide spans Ala256–Phe278 (removed in mature form).

Belongs to the fasciclin-like AGP family.

It is found in the cell membrane. May be a cell surface adhesion protein. In Arabidopsis thaliana (Mouse-ear cress), this protein is Fasciclin-like arabinogalactan protein 5 (FLA5).